We begin with the raw amino-acid sequence, 453 residues long: Na(+)/H(+) antiporter NhaA (453 aa).

A run of 11 helical transmembrane segments spans residues 22 to 42 (ASLL…SPWA), 72 to 92 (MLAF…GLEI), 108 to 128 (LLPI…YMLV), 137 to 157 (GAAI…GLLG), 166 to 186 (IFLT…IALF), 189 to 209 (GHIA…LYVG), 218 to 238 (LFFY…GIHP), 316 to 336 (PLVN…VTFG), 343 to 363 (LVNV…LGIF), 386 to 406 (LFGV…IANL), and 424 to 444 (LGVF…LKWV).

Belongs to the NhaA Na(+)/H(+) (TC 2.A.33) antiporter family.

The protein localises to the cell inner membrane. It catalyses the reaction Na(+)(in) + 2 H(+)(out) = Na(+)(out) + 2 H(+)(in). Na(+)/H(+) antiporter that extrudes sodium in exchange for external protons. This is Na(+)/H(+) antiporter NhaA from Parabacteroides distasonis (strain ATCC 8503 / DSM 20701 / CIP 104284 / JCM 5825 / NCTC 11152).